Here is a 277-residue protein sequence, read N- to C-terminus: 14-3-3 protein (277 aa).

Residues 252–277 (LQTQEQQQQPVGEGAEAPKVEATEQQ) form a disordered region. The span at 267 to 277 (EAPKVEATEQQ) shows a compositional bias: basic and acidic residues.

This sequence belongs to the 14-3-3 family.

This is 14-3-3 protein from Eimeria tenella (Coccidian parasite).